Reading from the N-terminus, the 506-residue chain is Maturase K (506 aa).

This sequence belongs to the intron maturase 2 family. MatK subfamily.

Its subcellular location is the plastid. It is found in the chloroplast. In terms of biological role, usually encoded in the trnK tRNA gene intron. Probably assists in splicing its own and other chloroplast group II introns. This Jasminum nudiflorum (Winter jasmine) protein is Maturase K.